Consider the following 67-residue polypeptide: Protein AaeX (67 aa).

The next 2 helical transmembrane spans lie at 9 to 29 (IFGLSFPPVFFELLVPLALFF) and 47 to 67 (PALFNTALYCCLFYLISCLFV).

This sequence belongs to the AaeX family.

Its subcellular location is the cell membrane. This is Protein AaeX from Serratia marcescens.